Here is a 295-residue protein sequence, read N- to C-terminus: UDP-N-acetylenolpyruvoylglucosamine reductase (295 aa).

Residues 23–188 enclose the FAD-binding PCMH-type domain; that stretch reads KVGGPADFLA…ISAKFALKPG (166 aa). Residue Arg167 is part of the active site. Ser217 (proton donor) is an active-site residue. Glu287 is an active-site residue.

It belongs to the MurB family. FAD serves as cofactor.

It is found in the cytoplasm. It catalyses the reaction UDP-N-acetyl-alpha-D-muramate + NADP(+) = UDP-N-acetyl-3-O-(1-carboxyvinyl)-alpha-D-glucosamine + NADPH + H(+). It functions in the pathway cell wall biogenesis; peptidoglycan biosynthesis. Functionally, cell wall formation. This Streptococcus pyogenes serotype M6 (strain ATCC BAA-946 / MGAS10394) protein is UDP-N-acetylenolpyruvoylglucosamine reductase.